Reading from the N-terminus, the 333-residue chain is 6-phosphogluconolactonase (333 aa).

This sequence belongs to the cycloisomerase 2 family.

The catalysed reaction is 6-phospho-D-glucono-1,5-lactone + H2O = 6-phospho-D-gluconate + H(+). It functions in the pathway carbohydrate degradation; pentose phosphate pathway; D-ribulose 5-phosphate from D-glucose 6-phosphate (oxidative stage): step 2/3. Catalyzes the hydrolysis of 6-phosphogluconolactone to 6-phosphogluconate. The chain is 6-phosphogluconolactonase from Yersinia enterocolitica serotype O:8 / biotype 1B (strain NCTC 13174 / 8081).